Here is a 253-residue protein sequence, read N- to C-terminus: Tryptophan synthase alpha chain (253 aa).

Catalysis depends on proton acceptor residues Glu-47 and Asp-58.

The protein belongs to the TrpA family. As to quaternary structure, tetramer of two alpha and two beta chains.

It catalyses the reaction (1S,2R)-1-C-(indol-3-yl)glycerol 3-phosphate + L-serine = D-glyceraldehyde 3-phosphate + L-tryptophan + H2O. It participates in amino-acid biosynthesis; L-tryptophan biosynthesis; L-tryptophan from chorismate: step 5/5. Its function is as follows. The alpha subunit is responsible for the aldol cleavage of indoleglycerol phosphate to indole and glyceraldehyde 3-phosphate. This Lactococcus lactis subsp. cremoris (strain MG1363) protein is Tryptophan synthase alpha chain.